Here is an 85-residue protein sequence, read N- to C-terminus: Neurotoxin BmKAEP2 (85 aa).

The signal sequence occupies residues 1–21 (MKLFLLLVISASMLIDGLVNA). Positions 22–82 (DGYIRGSNGC…TWKSESNTCG (61 aa)) constitute an LCN-type CS-alpha/beta domain. Cystine bridges form between C31-C81, C35-C56, C42-C63, and C46-C65.

The protein belongs to the long (4 C-C) scorpion toxin superfamily. Sodium channel inhibitor family. Beta subfamily. In terms of tissue distribution, expressed by the venom gland.

It is found in the secreted. Its function is as follows. Depressant insect beta-toxins cause a transient contraction paralysis followed by a slow flaccid paralysis. They bind voltage-independently at site-4 of sodium channels (Nav) and shift the voltage of activation toward more negative potentials thereby affecting sodium channel activation and promoting spontaneous and repetitive firing. This toxin is active only on insects. Has potential anti-epilepsy effect. The polypeptide is Neurotoxin BmKAEP2 (Olivierus martensii (Manchurian scorpion)).